Here is a 509-residue protein sequence, read N- to C-terminus: Glycerol kinase (509 aa).

Residue Thr-17 participates in ADP binding. ATP is bound by residues Thr-17, Thr-18, and Ser-19. Thr-17 contacts sn-glycerol 3-phosphate. An ADP-binding site is contributed by Arg-21. Residues Arg-87, Glu-88, Tyr-139, and Asp-256 each coordinate sn-glycerol 3-phosphate. Glycerol is bound by residues Arg-87, Glu-88, Tyr-139, Asp-256, and Gln-257. The ADP site is built by Thr-278 and Gly-322. Residues Thr-278, Gly-322, Gln-326, and Ala-423 each contribute to the ATP site. Ala-423 and Asn-427 together coordinate ADP.

This sequence belongs to the FGGY kinase family.

The catalysed reaction is glycerol + ATP = sn-glycerol 3-phosphate + ADP + H(+). It participates in polyol metabolism; glycerol degradation via glycerol kinase pathway; sn-glycerol 3-phosphate from glycerol: step 1/1. With respect to regulation, inhibited by fructose 1,6-bisphosphate (FBP). Functionally, key enzyme in the regulation of glycerol uptake and metabolism. Catalyzes the phosphorylation of glycerol to yield sn-glycerol 3-phosphate. The sequence is that of Glycerol kinase from Corynebacterium glutamicum (strain R).